The chain runs to 428 residues: Gamma-glutamyl phosphate reductase (428 aa).

It belongs to the gamma-glutamyl phosphate reductase family.

The protein resides in the cytoplasm. The catalysed reaction is L-glutamate 5-semialdehyde + phosphate + NADP(+) = L-glutamyl 5-phosphate + NADPH + H(+). It functions in the pathway amino-acid biosynthesis; L-proline biosynthesis; L-glutamate 5-semialdehyde from L-glutamate: step 2/2. In terms of biological role, catalyzes the NADPH-dependent reduction of L-glutamate 5-phosphate into L-glutamate 5-semialdehyde and phosphate. The product spontaneously undergoes cyclization to form 1-pyrroline-5-carboxylate. The sequence is that of Gamma-glutamyl phosphate reductase from Chromohalobacter salexigens (strain ATCC BAA-138 / DSM 3043 / CIP 106854 / NCIMB 13768 / 1H11).